Reading from the N-terminus, the 356-residue chain is GTPase HflX (356 aa).

The Hflx-type G domain occupies 180–356; it reads PSIGIVGYTN…KIYQLATQLS (177 aa). GTP is bound by residues 186–193, 211–215, 232–235, 300–303, and 334–336; these read GYTNSGKT, FTTMS, DTVG, NKID, and SAL. 2 residues coordinate Mg(2+): T193 and T213.

The protein belongs to the TRAFAC class OBG-HflX-like GTPase superfamily. HflX GTPase family. In terms of assembly, monomer. Associates with the 50S ribosomal subunit. Does not associate with 70S ribosomes. The cofactor is Mg(2+).

It localises to the cytoplasm. GTPase activity is stimulated by the presence of 50S ribosomal subunits. Hydrolysis is probably regulated by the HflX N-terminal domain. Its function is as follows. GTPase that associates with the 50S ribosomal subunit and may have a role during protein synthesis or ribosome biogenesis. Specific for GTP. This is GTPase HflX from Saccharolobus solfataricus (strain ATCC 35092 / DSM 1617 / JCM 11322 / P2) (Sulfolobus solfataricus).